The following is a 200-amino-acid chain: Small ribosomal subunit protein uS4 (200 aa).

The tract at residues 22 to 42 (TGKELEKRPYAPGPHGPNQRK) is disordered. In terms of domain architecture, S4 RNA-binding spans 92-152 (ARLDNLVYRM…EKSRNLAVIK (61 aa)).

The protein belongs to the universal ribosomal protein uS4 family. Part of the 30S ribosomal subunit. Contacts protein S5. The interaction surface between S4 and S5 is involved in control of translational fidelity.

One of the primary rRNA binding proteins, it binds directly to 16S rRNA where it nucleates assembly of the body of the 30S subunit. Its function is as follows. With S5 and S12 plays an important role in translational accuracy. This Bacillus cytotoxicus (strain DSM 22905 / CIP 110041 / 391-98 / NVH 391-98) protein is Small ribosomal subunit protein uS4.